Here is a 295-residue protein sequence, read N- to C-terminus: Small ribosomal subunit protein uS2 (295 aa).

The interval Gln261 to Ala295 is disordered.

It belongs to the universal ribosomal protein uS2 family.

This chain is Small ribosomal subunit protein uS2, found in Rickettsia rickettsii (strain Sheila Smith).